Here is a 608-residue protein sequence, read N- to C-terminus: Protoheme IX farnesyltransferase (608 aa).

The tract at residues 1–338 (MKTPAWSRLA…DYLALTKPRV (338 aa)) is COX15/CtaA. The next 17 helical transmembrane spans lie at 10-30 (AGYA…GAYV), 67-87 (ATSG…LRAF), 99-119 (LALF…LFGW), 139-159 (TYFL…GGPL), 167-187 (VGLA…SGAV), 220-240 (VLHP…GYLV), 252-272 (LAQG…INVA), 277-297 (VWMQ…FVFL), 338-357 (VISL…AKGW), 362-384 (VFLA…NMVV), 411-431 (LLFA…GANL), 432-452 (LAAT…TLYL), 460-480 (IVIG…AVTG), 488-508 (YLFA…ALMI), 530-550 (VIQI…PLLL), 555-575 (LLYL…SLAL), and 584-604 (AVSL…AMAV). Residues 339–608 (ISLLLFTALF…FAAMAVDRAV (270 aa)) are protoheme IX prenyltransferase.

In the N-terminal section; belongs to the COX15/CtaA family. This sequence in the C-terminal section; belongs to the UbiA prenyltransferase family. Protoheme IX farnesyltransferase subfamily.

The protein resides in the cell inner membrane. The enzyme catalyses heme b + (2E,6E)-farnesyl diphosphate + H2O = Fe(II)-heme o + diphosphate. The protein operates within porphyrin-containing compound metabolism; heme O biosynthesis; heme O from protoheme: step 1/1. In terms of biological role, converts heme B (protoheme IX) to heme O by substitution of the vinyl group on carbon 2 of heme B porphyrin ring with a hydroxyethyl farnesyl side group. The sequence is that of Protoheme IX farnesyltransferase (ctaB) from Thermus thermophilus (strain ATCC 27634 / DSM 579 / HB8).